We begin with the raw amino-acid sequence, 178 residues long: MSRIGNSPVAVPSNVTVTINGQNVEVKGPKGTLAIDVPEPITIAQEGDEIVVSRPDDHRKSRSLHGLSRSLINNMVVGVTEGYTIKMEIFGVGYRVLAKGSDLEFSLGYSHPILIKAPEGITFAVDGQTKFSISGIDKQQVGQLAANIRRLRKDDPYKGKGIRYEGEQIRRKVGKTGK.

Belongs to the universal ribosomal protein uL6 family. As to quaternary structure, part of the 50S ribosomal subunit.

In terms of biological role, this protein binds to the 23S rRNA, and is important in its secondary structure. It is located near the subunit interface in the base of the L7/L12 stalk, and near the tRNA binding site of the peptidyltransferase center. The sequence is that of Large ribosomal subunit protein uL6 from Corynebacterium kroppenstedtii (strain DSM 44385 / JCM 11950 / CIP 105744 / CCUG 35717).